Consider the following 166-residue polypeptide: Cyanate hydratase (166 aa).

Active-site residues include Arg92, Glu95, and Ser118.

This sequence belongs to the cyanase family.

The catalysed reaction is cyanate + hydrogencarbonate + 3 H(+) = NH4(+) + 2 CO2. Catalyzes the reaction of cyanate with bicarbonate to produce ammonia and carbon dioxide. The polypeptide is Cyanate hydratase (Sorghum bicolor (Sorghum)).